Here is a 121-residue protein sequence, read N- to C-terminus: Basic phospholipase A2 homolog BnSP-7 (121 aa).

7 cysteine pairs are disulfide-bonded: C26–C115, C28–C44, C43–C95, C49–C121, C50–C88, C57–C81, and C75–C86. The interval 105–117 (KKYRYHLKPFCKK) is important for membrane-damaging activities in eukaryotes and bacteria; heparin-binding.

This sequence belongs to the phospholipase A2 family. Group II subfamily. K49 sub-subfamily. As to quaternary structure, homodimer; non-covalently linked (probable alternative/compact dimer conformation in solution). In terms of tissue distribution, expressed by the venom gland.

The protein localises to the secreted. Heparin inhibits the neuromuscular effect, myotoxin activity and edema-inducing effects. Bromophenacyl bromide (BPB) inhibits the neuromuscular effect, the myotoxin activity and edema-inducing effects. Functionally, snake venom phospholipase A2 (PLA2) that lacks enzymatic activity. Is myotoxic and displays edema-inducing activity. Displays bactericidal activity and promotes the blockage of the neuromuscular contraction of the chick biventer cervicis muscle. Also disrupts artificial membranes, and provokes tissue damages characterized by edema, necrosis and inflammation. May act as pro-inflammatory mediators, inducing metalloproteinase and cytokine production from the inflammatory and satellite cells. A model of myotoxic mechanism has been proposed: an apo Lys49-PLA2 is activated by the entrance of a hydrophobic molecule (e.g. fatty acid) at the hydrophobic channel of the protein leading to a reorientation of a monomer. This reorientation causes a transition between 'inactive' to 'active' states, causing alignment of C-terminal and membrane-docking sites (MDoS) side-by-side and putting the membrane-disruption sites (MDiS) in the same plane, exposed to solvent and in a symmetric position for both monomers. The MDoS region stabilizes the toxin on membrane by the interaction of charged residues with phospholipid head groups. Subsequently, the MDiS region destabilizes the membrane with penetration of hydrophobic residues. This insertion causes a disorganization of the membrane, allowing an uncontrolled influx of ions (i.e. calcium and sodium), and eventually triggering irreversible intracellular alterations and cell death. In Bothrops pauloensis (Neuwied's lancehead), this protein is Basic phospholipase A2 homolog BnSP-7.